Reading from the N-terminus, the 173-residue chain is NADH-ubiquinone oxidoreductase chain 6 (173 aa).

5 helical membrane-spanning segments follow: residues 1 to 21 (MTYF…AVAS), 27 to 47 (YGVV…LSLG), 48 to 68 (VSFV…VVFV), 87 to 107 (VVGY…IGGF), and 139 to 159 (CGVG…FVVL).

Belongs to the complex I subunit 6 family.

The protein resides in the mitochondrion membrane. It catalyses the reaction a ubiquinone + NADH + 5 H(+)(in) = a ubiquinol + NAD(+) + 4 H(+)(out). Core subunit of the mitochondrial membrane respiratory chain NADH dehydrogenase (Complex I) that is believed to belong to the minimal assembly required for catalysis. Complex I functions in the transfer of electrons from NADH to the respiratory chain. The immediate electron acceptor for the enzyme is believed to be ubiquinone. In Cepphus columba (Pigeon guillemot), this protein is NADH-ubiquinone oxidoreductase chain 6 (MT-ND6).